The primary structure comprises 542 residues: CTP synthase (542 aa).

The amidoligase domain stretch occupies residues 1–265 (MTRYVFITGG…DREILAHFQM (265 aa)). S13 contacts CTP. Residue S13 coordinates UTP. ATP is bound by residues 14–19 (SLGKGL) and D71. Residues D71 and E139 each contribute to the Mg(2+) site. CTP contacts are provided by residues 146–148 (DIE), 186–191 (KTKPTQ), and K222. UTP-binding positions include 186–191 (KTKPTQ) and K222. Residue 238–240 (RDV) participates in ATP binding. Positions 291 to 541 (TIAIVGKYTG…IAAAIDQSRL (251 aa)) constitute a Glutamine amidotransferase type-1 domain. Residue G353 coordinates L-glutamine. C380 (nucleophile; for glutamine hydrolysis) is an active-site residue. L-glutamine-binding positions include 381–384 (FGMQ), E404, and R469. Active-site residues include H514 and E516.

This sequence belongs to the CTP synthase family. Homotetramer.

The catalysed reaction is UTP + L-glutamine + ATP + H2O = CTP + L-glutamate + ADP + phosphate + 2 H(+). It catalyses the reaction L-glutamine + H2O = L-glutamate + NH4(+). It carries out the reaction UTP + NH4(+) + ATP = CTP + ADP + phosphate + 2 H(+). It functions in the pathway pyrimidine metabolism; CTP biosynthesis via de novo pathway; CTP from UDP: step 2/2. Its activity is regulated as follows. Allosterically activated by GTP, when glutamine is the substrate; GTP has no effect on the reaction when ammonia is the substrate. The allosteric effector GTP functions by stabilizing the protein conformation that binds the tetrahedral intermediate(s) formed during glutamine hydrolysis. Inhibited by the product CTP, via allosteric rather than competitive inhibition. Functionally, catalyzes the ATP-dependent amination of UTP to CTP with either L-glutamine or ammonia as the source of nitrogen. Regulates intracellular CTP levels through interactions with the four ribonucleotide triphosphates. The protein is CTP synthase of Methylorubrum extorquens (strain CM4 / NCIMB 13688) (Methylobacterium extorquens).